A 361-amino-acid chain; its full sequence is RuBisCO accumulation factor 1 (361 aa).

Residues 16-197 (NELAQELLRK…RKQIEQLLVD (182 aa)) form an N-terminal alpha-helix region. The C-terminal beta-sheet stretch occupies residues 221-347 (PRIVPVVGQL…VIILVRPRRI (127 aa)).

This sequence belongs to the RAF family. Homodimer. Forms an RbcL(8)-Raf1(8) complex. Each Raf1 dimer clamps the exterior of an RbcL dimer, protecting it. The extreme C-terminus (residues 354-361) inserts into the catalytic pocket of RbcL where the Glu-361 forms a salt bridge with 'Lys-202'. This insertion probably contributes to the assembly of RbcL(8). Forms complexes of many stoichiometries with RbcL with and without RbcS. RbcX and Raf1 can bind simultaneously to RbcL.

The protein resides in the cytoplasm. A major RuBisCO chaperone. Acts after GroEL-GroES chaperonin to fold and/or assemble the large subunit of RuBisCO (ccbL, rbcL). Cooperates with RbcX in RbcL folding, plays the major role in assembly of dimers into RbcL(8)-Raf1(8) intermediate complexes. RbcS replaces Raf1, leading to holoenzyme formation. In terms of biological role, in vitro acts as an antagonist to CcmM35, suggesting it might regulate RuBisCO condensation and decondensation. The polypeptide is RuBisCO accumulation factor 1 (Nostoc sp. (strain PCC 7120 / SAG 25.82 / UTEX 2576)).